We begin with the raw amino-acid sequence, 289 residues long: MEKYHGLEKIGEGTYGVVYKAQNSDGESFALKKIRLEKEDEGIPSTVSIREISILKELRHSNIVKLYDVIHAKKRLILVFEHLDQDLKKLIDVCDGGLESVTAKSFLLQLLNGIAYCHEHRVLHRDLKPQNLLINREGELKIADFGLARAFGIPARRYTHEVVTLWYRAPDILMGSKKYSTPIDIWSVGCIFAEMVNGRPLFPGVSETDQLMRIFKILGTPNSQNWPDVFKLPKYDPNFPVYEPLPWETFIKGLDDTGIDLLSKMLKLDPNQRITAKQAIEHPYFKETN.

The Protein kinase domain occupies 4-285 (YHGLEKIGEG…AKQAIEHPYF (282 aa)). ATP contacts are provided by residues 10–18 (IGEGTYGVV) and K32. The residue at position 14 (T14) is a Phosphothreonine. Y15 bears the Phosphotyrosine mark. The active-site Proton acceptor is the D126. T159 carries the phosphothreonine modification.

Belongs to the protein kinase superfamily. CMGC Ser/Thr protein kinase family. CDC2/CDKX subfamily. As to quaternary structure, may form a complex composed of at least the catalytic subunit CRK2 and a cyclin. It depends on Mg(2+) as a cofactor.

The protein localises to the cytoplasm. It carries out the reaction L-seryl-[protein] + ATP = O-phospho-L-seryl-[protein] + ADP + H(+). It catalyses the reaction L-threonyl-[protein] + ATP = O-phospho-L-threonyl-[protein] + ADP + H(+). The catalysed reaction is [DNA-directed RNA polymerase] + ATP = phospho-[DNA-directed RNA polymerase] + ADP + H(+). Phosphorylation at Thr-14 or Tyr-15 inactivates the enzyme, while phosphorylation at Thr-159 activates it. Serine/threonine-protein kinase. Involved in the control of the cell cycle. Required for entry into S-phase and mitosis. Probable component of the kinase complex that phosphorylates the repetitive C-terminus of RNA polymerase II. The protein is Cyclin-dependent kinase 2 homolog of Plasmodium yoelii yoelii.